We begin with the raw amino-acid sequence, 1465 residues long: DNA polymerase alpha catalytic subunit (1465 aa).

2 disordered regions span residues 20–39 (GSFAASRARREKKSKKGRQE) and 105–135 (LEDDALDTCGKGSDGKAHRKDRKDVKKPSVT). Residues 26–35 (RARREKKSKK) show a composition bias toward basic residues. Thr180 carries the phosphothreonine modification. Residues Ser192 and Ser215 each carry the phosphoserine modification. Position 230 is an N6-acetyllysine (Lys230). Residues 261–297 (DESMDTEKVDEKPVTAKTWDQETEPVERVEHEADPER) are disordered. Basic and acidic residues-rich tracts occupy residues 265–274 (DTEKVDEKPV) and 285–297 (PVERVEHEADPER). Residues 654–719 (RINECKVPYW…YHLSELVQQI (66 aa)) are DNA-binding. The residue at position 974 (Lys974) is an N6-succinyllysine. The segment at 1249 to 1380 (QFRVHQYHKD…NGPLCPVCMK (132 aa)) is DNA-binding. Positions 1287, 1290, 1314, 1319, 1352, 1357, 1375, and 1378 each coordinate Zn(2+). The segment at 1287 to 1317 (CPSCGTENIYDNVFEGSGLDMEPSLYRCSNV) adopts a CysA-type zinc-finger fold. Residues 1352 to 1378 (CEEPTCCSRLRRLPLHFSRNGPLCPVC) carry the CysB motif motif.

It belongs to the DNA polymerase type-B family. Component of the alpha DNA polymerase complex (also known as the alpha DNA polymerase-primase complex) consisting of four subunits: the catalytic subunit POLA1, the regulatory subunit POLA2, and the primase complex subunits PRIM1 and PRIM2 respectively. Within the complex, POLA1 directly interacts with PRIM2. Interacts with PARP1; this interaction functions as part of the control of replication fork progression. Interacts with MCM10 and WDHD1; these interactions recruit the polymerase alpha complex to the pre-replicative complex bound to DNA. Interacts with RPA1; this interaction stabilizes the replicative complex and reduces the misincorporation rate of DNA polymerase alpha by acting as a fidelity clamp. As to expression, expressed in those zones containing proliferating cells in the developing embryonic neocortex, as well as in the lateral and medial ganglionic eminences. After birth, expressed in cells that remain proliferating in the ventricular and subventricular zone of the striatum.

Its subcellular location is the nucleus. It localises to the cytoplasm. The protein localises to the cytosol. The enzyme catalyses DNA(n) + a 2'-deoxyribonucleoside 5'-triphosphate = DNA(n+1) + diphosphate. Its function is as follows. Catalytic subunit of the DNA polymerase alpha complex (also known as the alpha DNA polymerase-primase complex) which plays an essential role in the initiation of DNA synthesis. During the S phase of the cell cycle, the DNA polymerase alpha complex (composed of a catalytic subunit POLA1, a regulatory subunit POLA2 and two primase subunits PRIM1 and PRIM2) is recruited to DNA at the replicative forks via direct interactions with MCM10 and WDHD1. The primase subunit of the polymerase alpha complex initiates DNA synthesis by oligomerising short RNA primers on both leading and lagging strands. These primers are initially extended by the polymerase alpha catalytic subunit and subsequently transferred to polymerase delta and polymerase epsilon for processive synthesis on the lagging and leading strand, respectively. The reason this transfer occurs is because the polymerase alpha has limited processivity and lacks intrinsic 3' exonuclease activity for proofreading error, and therefore is not well suited for replicating long complexes. In the cytosol, responsible for a substantial proportion of the physiological concentration of cytosolic RNA:DNA hybrids, which are necessary to prevent spontaneous activation of type I interferon responses. The chain is DNA polymerase alpha catalytic subunit (Pola1) from Mus musculus (Mouse).